A 276-amino-acid chain; its full sequence is 28 kDa ribonucleoprotein, chloroplastic (276 aa).

Residues 1 to 57 (MATNGCLISLPPFFTTTKSISSYPFLSTQLKPISLSSSLPTLLSLNKRTTQFPTFVS) constitute a chloroplast transit peptide. 2 RRM domains span residues 97-175 (AKLF…KAAP) and 191-269 (YRIY…AAEE).

Its subcellular location is the plastid. It is found in the chloroplast. Probably involved in the 3'-end processing of chloroplast mRNA's. The chain is 28 kDa ribonucleoprotein, chloroplastic from Nicotiana sylvestris (Wood tobacco).